Here is a 224-residue protein sequence, read N- to C-terminus: uncharacterized protein (224 aa).

Residues 1-19 form the signal peptide; the sequence is MLRHITFTVFITTSMNTLA.

It belongs to the periplasmic pilus chaperone family.

It is found in the periplasm. Could be required for the biogenesis of a putative fimbria. This is an uncharacterized protein from Escherichia coli (strain K12).